A 140-amino-acid chain; its full sequence is Ubiquitin-like protein ATG12 (140 aa).

The disordered stretch occupies residues 1 to 50; that stretch reads MAEEPQSVLQLPTSIAAGGEGLTDVSPETTTPEPPSSAAVSPGTEEPAGD. Positions 25-42 are enriched in low complexity; it reads VSPETTTPEPPSSAAVSP. G140 is covalently cross-linked (Glycyl lysine isopeptide (Gly-Lys) (interchain with K-130 in ATG5)).

Belongs to the ATG12 family. As to quaternary structure, forms a conjugate with ATG5. Part of the minor complex composed of 4 sets of ATG12-ATG5 and ATG16L1 (400 kDa); this complex interacts with ATG3 leading to disruption of ATG7 interaction and promotion of ATG8-like proteins lipidation. Forms an 800-kDa complex composed of ATG12-ATG5 and ATG16L2. Interacts with DHX58/RIG-1, IFIH1/MDA5 and MAVS/IPS-1 in monomeric form as well as in ATG12-ATG5 conjugate. The interaction with MAVS is further enhanced upon vesicular stomatitis virus (VSV) infection. Interacts with ATG3; this interaction is essential for phosphatidylethanolamine (PE)-conjugated ATG8-like proteins formation. Interacts with ATG7. Interacts with ATG10. The ATG12-ATG5 conjugate interacts with RAB33A; this interaction is bridged by ATG16L1 and promotes ATG12-ATG5-ATG16L1 complex recruitment to phagophores. Interacts with TECPR1. Interacts with SH3BGRL. The ATG12-ATG5 conjugate interacts with PDCD6IP (via the BRO1 domain); this interaction is bridged by ATG12 and promotes multiple PDCD6IP-mediated functions such as endolysosomal trafficking, macroautophagy and exosome biogenesis. Post-translationally, acetylated by EP300. Ubiquitous.

The protein localises to the cytoplasm. The protein resides in the preautophagosomal structure membrane. In terms of biological role, ubiquitin-like protein involved in autophagy vesicles formation. Conjugation with ATG5 through a ubiquitin-like conjugating system involving also ATG7 as an E1-like activating enzyme and ATG10 as an E2-like conjugating enzyme, is essential for its function. The ATG12-ATG5 conjugate acts as an E3-like enzyme which is required for lipidation of ATG8 family proteins and their association to the vesicle membranes. As part of the ATG8 conjugation system with ATG5 and ATG16L1, required for recruitment of LRRK2 to stressed lysosomes and induction of LRRK2 kinase activity in response to lysosomal stress. Functionally, (Microbial infection) May act as a proviral factor. In association with ATG5, negatively regulates the innate antiviral immune response by impairing the type I IFN production pathway upon vesicular stomatitis virus (VSV) infection. Required for the translation of incoming hepatitis C virus (HCV) RNA and, thereby, for the initiation of HCV replication, but not required once infection is established. This is Ubiquitin-like protein ATG12 from Homo sapiens (Human).